Consider the following 199-residue polypeptide: Protein-methionine-sulfoxide reductase heme-binding subunit MsrQ (199 aa).

A run of 5 helical transmembrane segments spans residues 10-30 (WLKVAIWLAAALPFLWLILSV), 79-99 (LLGLWCFAWGTLHLVSYSVLE), 118-138 (LTLGIISWLLLLSLAVTSTLW), 147-167 (WQKLHNLVYVVAILAPIHYLW), and 169-189 (VKTLSPLPIIYAVTAAILLAL).

It belongs to the MsrQ family. As to quaternary structure, heterodimer of a catalytic subunit (MsrP) and a heme-binding subunit (MsrQ). The cofactor is FMN. Requires heme b as cofactor.

The protein localises to the cell inner membrane. In terms of biological role, part of the MsrPQ system that repairs oxidized periplasmic proteins containing methionine sulfoxide residues (Met-O), using respiratory chain electrons. Thus protects these proteins from oxidative-stress damage caused by reactive species of oxygen and chlorine generated by the host defense mechanisms. MsrPQ is essential for the maintenance of envelope integrity under bleach stress, rescuing a wide series of structurally unrelated periplasmic proteins from methionine oxidation. MsrQ provides electrons for reduction to the reductase catalytic subunit MsrP, using the quinone pool of the respiratory chain. The chain is Protein-methionine-sulfoxide reductase heme-binding subunit MsrQ from Yersinia enterocolitica serotype O:8 / biotype 1B (strain NCTC 13174 / 8081).